The primary structure comprises 303 residues: NAC domain-containing protein 48 (303 aa).

In terms of domain architecture, NAC spans 9–159 (LPPGFRFHPT…DWVLCRIYNK (151 aa)).

As to quaternary structure, interacts with NAC071. Widely expressed.

The protein localises to the nucleus. Its function is as follows. Transcription activator that binds to the promoter of the stress response gene LEA19. Involved in tolerance to abiotic stresses. Transcription activator involved in response to abiotic and biotic stresses. Involved in drought and salt stress responses, and defense response to the rice blast fungus. Transcription activator involved tolerance to cold and salt stresses. Transcription activator involved in tolerance to drought stress. Targets directly and activates genes involved in membrane modification, nicotianamine (NA) biosynthesis, glutathione relocation, accumulation of phosphoadenosine phosphosulfate and glycosylation in roots. Controls root growth at early vegetative stage through chromatin modification and histone lysine deacytaltion by HDAC1. The polypeptide is NAC domain-containing protein 48 (Oryza sativa subsp. japonica (Rice)).